Here is a 253-residue protein sequence, read N- to C-terminus: UPF0246 protein Swit_4565 (253 aa).

It belongs to the UPF0246 family.

The polypeptide is UPF0246 protein Swit_4565 (Rhizorhabdus wittichii (strain DSM 6014 / CCUG 31198 / JCM 15750 / NBRC 105917 / EY 4224 / RW1) (Sphingomonas wittichii)).